A 193-amino-acid polypeptide reads, in one-letter code: Ubiquitin-conjugating enzyme E2 E1 (193 aa).

Positions 1–45 (MSDDDSRASTSSSSSSSSNQQTEKEGSTPKKKESKVSMSKNSKLL) are disordered. N-acetylserine is present on S2. The segment covering 8–18 (ASTSSSSSSSS) has biased composition (low complexity). The span at 22–35 (TEKEGSTPKKKESK) shows a compositional bias: basic and acidic residues. Residues 36-45 (VSMSKNSKLL) are compositionally biased toward polar residues. The region spanning 47–193 (TSAKRIQKEL…ARQWTKRYAT (147 aa)) is the UBC core domain. Catalysis depends on C131, which acts as the Glycyl thioester intermediate. A Glycyl lysine isopeptide (Lys-Gly) (interchain with G-Cter in ISG15) cross-link involves residue K136.

The protein belongs to the ubiquitin-conjugating enzyme family. As to quaternary structure, interacts with RNF14. In terms of processing, ISGylation suppresses ubiquitin E2 enzyme activity. Autoubiquitinated.

Its subcellular location is the nucleus. It carries out the reaction S-ubiquitinyl-[E1 ubiquitin-activating enzyme]-L-cysteine + [E2 ubiquitin-conjugating enzyme]-L-cysteine = [E1 ubiquitin-activating enzyme]-L-cysteine + S-ubiquitinyl-[E2 ubiquitin-conjugating enzyme]-L-cysteine.. The enzyme catalyses S-ubiquitinyl-[E1 ubiquitin-activating enzyme]-L-cysteine + [acceptor protein]-L-lysine = [E1 ubiquitin-activating enzyme]-L-cysteine + N(6)-monoubiquitinyl-[acceptor protein]-L-lysine.. It functions in the pathway protein modification; protein ubiquitination. In terms of biological role, accepts ubiquitin from the E1 complex and catalyzes its covalent attachment to other proteins. Catalyzes the covalent attachment of ISG15 to other proteins. Mediates the selective degradation of short-lived and abnormal proteins. In vitro also catalyzes 'Lys-48'-linked polyubiquitination. The sequence is that of Ubiquitin-conjugating enzyme E2 E1 (Ube2e1) from Mus musculus (Mouse).